A 47-amino-acid chain; its full sequence is Putative beta-neurotoxin (47 aa).

Residues 1 to 47 (KEGYMGSDGCKMSCVINDQFCDTECQAKLKGSTGYCYFXGLACYXXG) enclose the LCN-type CS-alpha/beta domain. Intrachain disulfides connect Cys-14–Cys-36 and Cys-21–Cys-43.

Expressed by the venom gland.

The protein resides in the secreted. Causes transient paralysis of the rear legs of and spasms in insects (A.domestica). This is Putative beta-neurotoxin from Rhopalurus junceus (Caribbean blue scorpion).